We begin with the raw amino-acid sequence, 207 residues long: Venom allergen 5 (207 aa).

3 cysteine pairs are disulfide-bonded: C4-C16, C8-C105, and C29-C97. An SCP domain is found at 49–192; sequence DEHNRFRQKV…MKSHYLVCNY (144 aa). Residue Y111 is modified to Phosphotyrosine. An N-linked (Glc) (glycation) lysine glycan is attached at K141. An intrachain disulfide couples C173 to C190.

Belongs to the CRISP family. Venom allergen 5-like subfamily. In terms of processing, glycosylated. In terms of tissue distribution, expressed by the venom gland.

The protein localises to the secreted. The polypeptide is Venom allergen 5 (Polybia paulista (Neotropical social wasp)).